Consider the following 915-residue polypeptide: Coiled-coil domain-containing protein 57 (915 aa).

Residues 1-502 (MLPLGSEPAL…MHGLPRPGAQ (502 aa)) form a centrosomal targeting domain region. Coiled-coil stretches lie at residues 92–173 (VSEL…QRQE), 214–422 (LEAL…LERD), 456–483 (KSQV…VTLE), and 521–548 (IQRL…LSHQ). 3 disordered regions span residues 555–574 (TAAE…GDAA), 606–653 (PLKM…QAGP), and 724–915 (QHGG…NIMD). Residues 606-915 (PLKMSSPHAE…PKIRNYNIMD (310 aa)) are microtubule binding domain. The segment covering 613–627 (HAESQPSVRTSTETT) has biased composition (polar residues). A compositionally biased stretch (low complexity) spans 628 to 652 (GGSAQAGQAGGSVQAGQAGGSVQAG). Over residues 745–758 (GREDAKSAEDEAPS) the composition is skewed to basic and acidic residues. Polar residues-rich tracts occupy residues 781-794 (PKTQ…TCKS), 819-830 (SHSSSSFASGTL), and 841-852 (SSPSGVTSQGDS). Residues 879-891 (KTAAQAKAKTTGA) show a composition bias toward low complexity.

As to quaternary structure, interacts with CEP63; the interaction is required for their location to proximal end of centrioles. Interacts with microtubules.

The protein resides in the cytoplasm. It localises to the cytoskeleton. Its subcellular location is the microtubule organizing center. It is found in the centrosome. The protein localises to the centriolar satellite. The protein resides in the centriole. It localises to the spindle. In terms of biological role, pleiotropic regulator of centriole duplication, mitosis, and ciliogenesis. Critical interface between centrosome and microtubule-mediated cellular processes. Centriole duplication protein required for recruitment of CEP63, CEP152, and PLK4 to the centrosome. Independent of its centrosomal targeting, localizes to and interacts with microtubules and regulates microtubule nucleation, stability, and mitotic progression. The protein is Coiled-coil domain-containing protein 57 of Homo sapiens (Human).